A 424-amino-acid chain; its full sequence is Serine--tRNA ligase (424 aa).

229 to 231 (TAE) is an L-serine binding site. 260–262 (RRE) contributes to the ATP binding site. Position 283 (Glu-283) interacts with L-serine. 347 to 350 (EVSS) provides a ligand contact to ATP. L-serine is bound at residue Ser-383.

Belongs to the class-II aminoacyl-tRNA synthetase family. Type-1 seryl-tRNA synthetase subfamily. In terms of assembly, homodimer. The tRNA molecule binds across the dimer.

Its subcellular location is the cytoplasm. It catalyses the reaction tRNA(Ser) + L-serine + ATP = L-seryl-tRNA(Ser) + AMP + diphosphate + H(+). The enzyme catalyses tRNA(Sec) + L-serine + ATP = L-seryl-tRNA(Sec) + AMP + diphosphate + H(+). It participates in aminoacyl-tRNA biosynthesis; selenocysteinyl-tRNA(Sec) biosynthesis; L-seryl-tRNA(Sec) from L-serine and tRNA(Sec): step 1/1. Functionally, catalyzes the attachment of serine to tRNA(Ser). Is also able to aminoacylate tRNA(Sec) with serine, to form the misacylated tRNA L-seryl-tRNA(Sec), which will be further converted into selenocysteinyl-tRNA(Sec). The sequence is that of Serine--tRNA ligase from Roseiflexus sp. (strain RS-1).